The sequence spans 635 residues: DNA mismatch repair protein MutL (635 aa).

This sequence belongs to the DNA mismatch repair MutL/HexB family.

In terms of biological role, this protein is involved in the repair of mismatches in DNA. It is required for dam-dependent methyl-directed DNA mismatch repair. May act as a 'molecular matchmaker', a protein that promotes the formation of a stable complex between two or more DNA-binding proteins in an ATP-dependent manner without itself being part of a final effector complex. The sequence is that of DNA mismatch repair protein MutL from Yersinia pestis bv. Antiqua (strain Angola).